The sequence spans 239 residues: Diablo IAP-binding mitochondrial protein (239 aa).

The N-terminal 22 residues, 1–22 (MAVLKSWLSRSVTLLFRYRQCL), are a transit peptide targeting the mitochondrion. The IAP-binding signature appears at 56 to 60 (AVPIA). The segment at 217–239 (RQKTQEEGEERAESEQEAYLRED) is disordered.

The protein belongs to the Smac/DIABLO protein family. As to quaternary structure, homodimer. Interacts with BEX3. Interacts with BIRC2/c-IAP1 (via BIR3 domain). Interacts with BIRC6/BRUCE. Interacts with BIRC7/livin. Interacts with XIAP/BIRC4 (via BIR3 domain). Interacts with the monomeric and dimeric form of BIRC5/survivin. Interacts with AREL1 (via HECT domain); in the cytoplasm following induction of apoptosis. Ubiquitinated by BIRC7/livin. Ubiquitinated by BIRC6. In terms of processing, the precursor form is proteolytically cleaved by mitochondrial processing peptidase MPP to remove the transit peptide and produce an intermediate form. This is then processed by PARL to produce the mature cleaved form which is released from mitochondria into the cytosol in apoptotic cells.

The protein localises to the mitochondrion. It is found in the cytoplasm. It localises to the cytosol. Promotes apoptosis by activating caspases in the cytochrome c/Apaf-1/caspase-9 pathway. Acts by opposing the inhibitory activity of inhibitor of apoptosis proteins (IAP). Inhibits the activity of BIRC6/BRUCE by inhibiting its binding to caspases. In Pongo abelii (Sumatran orangutan), this protein is Diablo IAP-binding mitochondrial protein.